The sequence spans 146 residues: Hemoglobin subunit beta (146 aa).

V1 is subject to N-acetylvaline. One can recognise a Globin domain in the interval 2–146; it reads HLTGEEKAAV…VANALAHKYH (145 aa). Phosphothreonine is present on T12. S44 bears the Phosphoserine mark. K59 is subject to N6-acetyllysine. H63 is a heme b binding site. Residue K82 is modified to N6-acetyllysine. Position 92 (H92) interacts with heme b. C93 carries the post-translational modification S-nitrosocysteine. K144 carries the N6-acetyllysine modification.

The protein belongs to the globin family. As to quaternary structure, heterotetramer of two alpha chains and two beta chains. Red blood cells.

Involved in oxygen transport from the lung to the various peripheral tissues. This is Hemoglobin subunit beta (HBB) from Lutra lutra (European river otter).